The primary structure comprises 678 residues: Pentatricopeptide repeat-containing protein At5g39980, chloroplastic (678 aa).

The N-terminal 64 residues, 1–64 (MYIEIASSSS…NKKVWRKQPE (64 aa)), are a transit peptide targeting the chloroplast. PPR repeat units lie at residues 154 to 188 (SVFA…ALAP), 189 to 223 (DRYT…RVSG), 224 to 258 (DLVL…GITP), 259 to 293 (DLVA…GVLP), 294 to 328 (NTVS…NCAL), 329 to 363 (DLTT…DIEP), 364 to 398 (NVVS…DIEQ), 399 to 433 (NVVT…GIEP), 434 to 468 (NAIT…GVEI), 469 to 503 (DQVL…DNIP), 535 to 569 (DISV…GYFP), 570 to 604 (DSNV…GCVF), 605 to 638 (PDEV…DPNV), and 639 to 674 (NSKE…GILK).

Belongs to the PPR family. P subfamily.

It is found in the plastid. Its subcellular location is the chloroplast. This is Pentatricopeptide repeat-containing protein At5g39980, chloroplastic from Arabidopsis thaliana (Mouse-ear cress).